The sequence spans 703 residues: 1,4-alpha-glucan-branching enzyme (703 aa).

2 residues coordinate (1,4-alpha-D-glucosyl)n: W93 and K130. D355 functions as the Nucleophile in the catalytic mechanism. E415 functions as the Proton donor in the catalytic mechanism.

The protein belongs to the glycosyl hydrolase 13 family. GlgB subfamily.

The protein resides in the cytoplasm. The catalysed reaction is Transfers a segment of a (1-&gt;4)-alpha-D-glucan chain to a primary hydroxy group in a similar glucan chain.. Its pathway is glycan biosynthesis; glycogen biosynthesis. Glycogen-branching enzyme participates in the glycogen biosynthetic process along with glycogenin and glycogen synthase. Generates alpha-1,6-glucosidic branches from alpha-1,4-linked glucose chains, to increase solubility of the glycogen polymer. The sequence is that of 1,4-alpha-glucan-branching enzyme (GLC3) from Eremothecium gossypii (strain ATCC 10895 / CBS 109.51 / FGSC 9923 / NRRL Y-1056) (Yeast).